Here is a 548-residue protein sequence, read N- to C-terminus: Glucan endo-1,3-beta-glucosidase (548 aa).

The segment at residues 1-36 is a signal peptide (tat-type signal); that stretch reads MPHDRKNSSRRAWAALCAAVLAVSGALVGVAAPASA. In terms of domain architecture, GH64 spans 38 to 396; sequence PATIPLTITN…PQAAYIKLDP (359 aa). Glutamate 153 serves as the catalytic Proton donor. The active-site Proton acceptor is aspartate 169. Positions 422-548 constitute a Ricin B-type lectin domain; the sequence is GTGALRIGST…NQTEAQRWTL (127 aa).

It belongs to the glycosyl hydrolase 64 family. In terms of processing, predicted to be exported by the Tat system. The position of the signal peptide cleavage has not been experimentally proven.

It is found in the periplasm. It catalyses the reaction Hydrolysis of (1-&gt;3)-beta-D-glucosidic linkages in (1-&gt;3)-beta-D-glucans.. In terms of biological role, lysis of cellular walls containing beta-1,3-glucans. Implicated in the defense against fungal pathogens. This Arthrobacter sp. (strain YCWD3) protein is Glucan endo-1,3-beta-glucosidase (glcI).